Consider the following 312-residue polypeptide: MSNAPRHFLDLDEMPTKELRAVLDAGVALKAKLKSQKARNTLREKPLEGKTLAMIFERPSTRTRVSFDVGMRQLGGESIMLTGAEMQLGRGETIADTARVLSRYVDAIMIRILNHDALLELAEFATVPVINGLTRRSHPCQVMADLMTFEEHRGPIEGRTIAWTGDDNNVLASWAHAAERFNFTLRIATPPELAPGKPMRDWIKSSGASIVLGTDPEEAVRGADCVLTDTWVSMGDKDGEHRHNLLKPYQVNTQLMSLAKPDALFMHCLPAHRGEEVTDEVIDGPQSVVFDEAENRLHAQKGILAWCFGAVG.

Residues 60-63 (STRT), Q87, R111, and 138-141 (HPCQ) each bind carbamoyl phosphate. L-ornithine contacts are provided by residues N169, D229, and 233–234 (SM). Carbamoyl phosphate is bound by residues 268 to 269 (CL) and R296.

It belongs to the aspartate/ornithine carbamoyltransferase superfamily. OTCase family.

It is found in the cytoplasm. The catalysed reaction is carbamoyl phosphate + L-ornithine = L-citrulline + phosphate + H(+). Its pathway is amino-acid biosynthesis; L-arginine biosynthesis; L-arginine from L-ornithine and carbamoyl phosphate: step 1/3. Reversibly catalyzes the transfer of the carbamoyl group from carbamoyl phosphate (CP) to the N(epsilon) atom of ornithine (ORN) to produce L-citrulline. The polypeptide is Ornithine carbamoyltransferase (Rhodopseudomonas palustris (strain BisA53)).